The chain runs to 362 residues: Putative RING-H2 finger protein ATL21B (362 aa).

An N-terminal signal peptide occupies residues 1–23; sequence MIISKQLFLLFFLLFFIFPLRHA. A helical transmembrane segment spans residues 234–254; sequence VVAVLICLSIIGAVILFVTCI. Residues 316–358 form an RING-type; atypical zinc finger; that stretch reads CPICLSEYVSKETVRFIPECDHCFHAKCIDVWLKIHGSCPLCR.

This sequence belongs to the RING-type zinc finger family. ATL subfamily.

The protein resides in the membrane. The enzyme catalyses S-ubiquitinyl-[E2 ubiquitin-conjugating enzyme]-L-cysteine + [acceptor protein]-L-lysine = [E2 ubiquitin-conjugating enzyme]-L-cysteine + N(6)-ubiquitinyl-[acceptor protein]-L-lysine.. It functions in the pathway protein modification; protein ubiquitination. The chain is Putative RING-H2 finger protein ATL21B (ATL21B) from Arabidopsis thaliana (Mouse-ear cress).